Consider the following 462-residue polypeptide: ATP synthase subunit beta 1 (462 aa).

151 to 158 (GGAGVGKT) is an ATP binding site.

The protein belongs to the ATPase alpha/beta chains family. As to quaternary structure, F-type ATPases have 2 components, CF(1) - the catalytic core - and CF(0) - the membrane proton channel. CF(1) has five subunits: alpha(3), beta(3), gamma(1), delta(1), epsilon(1). CF(0) has four main subunits: a(1), b(1), b'(1) and c(9-12).

It is found in the cell inner membrane. The catalysed reaction is ATP + H2O + 4 H(+)(in) = ADP + phosphate + 5 H(+)(out). Functionally, produces ATP from ADP in the presence of a proton gradient across the membrane. The catalytic sites are hosted primarily by the beta subunits. The protein is ATP synthase subunit beta 1 of Chlorobium luteolum (strain DSM 273 / BCRC 81028 / 2530) (Pelodictyon luteolum).